The chain runs to 401 residues: Transcriptional regulator Myc-2 (401 aa).

The O-linked (GlcNAc) threonine glycan is linked to T58. The 9aaTAD signature appears at 76–84; it reads EMVSEFLGD. Disordered stretches follow at residues 177-251 and 286-325; these read SSKS…SRYP and LESSSSNNSSSNRQGKQRKCTSPRTSDSEDNDKRRTHNVL. The span at 205-230 shows a compositional bias: acidic residues; that stretch reads DSEDEEEEEEEEEEEEEEEEEEEEID. Residues 233-247 show a composition bias toward basic and acidic residues; it reads TVEKRQKRNEAEVSD. Residues 288–297 are compositionally biased toward low complexity; sequence SSSSNNSSSN. A bHLH domain is found at 317–369; the sequence is DKRRTHNVLERQRRNELKLSFFALRDEIPEVANNEKAAKVVILKKATECIHSM. Positions 376–397 are leucine-zipper; that stretch reads LLSIKEQLRRKSEQLKHRLQQL.

Efficient DNA binding requires dimerization with another bHLH protein. Binds DNA as a heterodimer with MAX.

It localises to the nucleus. Functionally, transcription factor that binds DNA in a non-specific manner, yet also specifically recognizes the core sequence 5'-CAC[GA]TG-3'. Activates the transcription of growth-related genes. The protein is Transcriptional regulator Myc-2 (mycb) of Cyprinus carpio (Common carp).